A 394-amino-acid chain; its full sequence is Obg-like ATPase 1 (394 aa).

Residues 21-285 (LKAGIVGLAN…MSPEDAEEEL (265 aa)) form the OBG-type G domain. 30 to 35 (NVGKST) serves as a coordination point for ATP. 2 residues coordinate Mg(2+): Ser34 and Thr55. Position 89 is a phosphothreonine (Thr89). Lys98 participates in a covalent cross-link: Glycyl lysine isopeptide (Lys-Gly) (interchain with G-Cter in ubiquitin). Phosphoserine occurs at positions 116 and 119. Position 233 (Leu233) interacts with ATP. One can recognise a TGS domain in the interval 306 to 389 (DLISFFTCGP…EDGDIIYFRA (84 aa)).

The protein belongs to the TRAFAC class OBG-HflX-like GTPase superfamily. OBG GTPase family. YchF/OLA1 subfamily. In terms of assembly, monomer. Interacts with the 26S proteasome subunit RPT6. The cofactor is Mg(2+).

It is found in the cytoplasm. Its function is as follows. Hydrolyzes ATP, and can also hydrolyze GTP with lower efficiency. Has lower affinity for GTP. The polypeptide is Obg-like ATPase 1 (Saccharomyces cerevisiae (strain ATCC 204508 / S288c) (Baker's yeast)).